We begin with the raw amino-acid sequence, 166 residues long: NADH-ubiquinone oxidoreductase chain 6 (166 aa).

Transmembrane regions (helical) follow at residues 1-21 (MMYFIYLLSVMLVLSFMAFAS), 26-46 (IYGGLSLVLSGGVGCGIIVSL), 47-67 (GGSFLGLIVFLVYLGGMLVVF), 86-106 (TVVLNLAIMVGMLGVVWYEFF), and 139-159 (CGGWELVFSGWILFLTIFVVL).

Belongs to the complex I subunit 6 family. As to quaternary structure, core subunit of respiratory chain NADH dehydrogenase (Complex I) which is composed of 45 different subunits.

The protein resides in the mitochondrion inner membrane. It catalyses the reaction a ubiquinone + NADH + 5 H(+)(in) = a ubiquinol + NAD(+) + 4 H(+)(out). In terms of biological role, core subunit of the mitochondrial membrane respiratory chain NADH dehydrogenase (Complex I) which catalyzes electron transfer from NADH through the respiratory chain, using ubiquinone as an electron acceptor. Essential for the catalytic activity and assembly of complex I. This chain is NADH-ubiquinone oxidoreductase chain 6 (MT-ND6), found in Tachyglossus aculeatus aculeatus (Southeast Australian short-beaked echidna).